The primary structure comprises 71 residues: Protein translocase subunit SecE (71 aa).

A helical transmembrane segment spans residues valine 43–threonine 63.

This sequence belongs to the SecE/SEC61-gamma family. Component of the Sec protein translocase complex. Heterotrimer consisting of SecY (alpha), SecG (beta) and SecE (gamma) subunits. The heterotrimers can form oligomers, although 1 heterotrimer is thought to be able to translocate proteins. Interacts with the ribosome. May interact with SecDF, and other proteins may be involved.

The protein resides in the cell membrane. Essential subunit of the Sec protein translocation channel SecYEG. Clamps together the 2 halves of SecY. May contact the channel plug during translocation. The sequence is that of Protein translocase subunit SecE from Methanosarcina mazei (strain ATCC BAA-159 / DSM 3647 / Goe1 / Go1 / JCM 11833 / OCM 88) (Methanosarcina frisia).